The following is a 305-amino-acid chain: N-acetylmuramic acid 6-phosphate etherase (305 aa).

The segment at 1–24 (MTTPPSSPLSDPRRTEGVHPTHTD) is disordered. A compositionally biased stretch (basic and acidic residues) spans 11–24 (DPRRTEGVHPTHTD). The region spanning 62-225 (ALPRLERGGR…SSALMVRLGK (164 aa)) is the SIS domain. The active-site Proton donor is glutamate 90. The active site involves glutamate 121.

The protein belongs to the GCKR-like family. MurNAc-6-P etherase subfamily. In terms of assembly, homodimer.

The catalysed reaction is N-acetyl-D-muramate 6-phosphate + H2O = N-acetyl-D-glucosamine 6-phosphate + (R)-lactate. Its pathway is amino-sugar metabolism; N-acetylmuramate degradation. Functionally, specifically catalyzes the cleavage of the D-lactyl ether substituent of MurNAc 6-phosphate, producing GlcNAc 6-phosphate and D-lactate. The polypeptide is N-acetylmuramic acid 6-phosphate etherase (Deinococcus geothermalis (strain DSM 11300 / CIP 105573 / AG-3a)).